The following is a 132-amino-acid chain: Outer membrane protein RomA (132 aa).

It to M.tuberculosis Rv0906.

The protein localises to the cell outer membrane. In Klebsiella pneumoniae, this protein is Outer membrane protein RomA (romA).